The sequence spans 502 residues: ATP synthase subunit alpha (502 aa).

169 to 176 (GDRQTGKT) is an ATP binding site.

Belongs to the ATPase alpha/beta chains family. As to quaternary structure, F-type ATPases have 2 components, CF(1) - the catalytic core - and CF(0) - the membrane proton channel. CF(1) has five subunits: alpha(3), beta(3), gamma(1), delta(1), epsilon(1). CF(0) has three main subunits: a(1), b(2) and c(9-12). The alpha and beta chains form an alternating ring which encloses part of the gamma chain. CF(1) is attached to CF(0) by a central stalk formed by the gamma and epsilon chains, while a peripheral stalk is formed by the delta and b chains.

The protein resides in the cell inner membrane. The enzyme catalyses ATP + H2O + 4 H(+)(in) = ADP + phosphate + 5 H(+)(out). Produces ATP from ADP in the presence of a proton gradient across the membrane. The alpha chain is a regulatory subunit. The chain is ATP synthase subunit alpha from Pelobacter propionicus (strain DSM 2379 / NBRC 103807 / OttBd1).